Reading from the N-terminus, the 183-residue chain is Histone deacetylase complex subunit SAP30L (183 aa).

At methionine 1 the chain carries N-acetylmethionine. A compositionally biased stretch (acidic residues) spans 1–10 (MNGFSTEEDS). The interval 1 to 23 (MNGFSTEEDSREGPPAAPAAAAP) is disordered. Intrachain disulfides connect cysteine 29–cysteine 30 and cysteine 38–cysteine 74. Residues 29-77 (CCLIEDGERCVRPAGNASFSKRVQKSISQKKLKLDIDKSVRHLYICDFH) form an Atypical zinc finger. Lysine 49 is covalently cross-linked (Glycyl lysine isopeptide (Lys-Gly) (interchain with G-Cter in SUMO2)). The interval 85–105 (RNKRKRKTSDDGGDSPEHDTD) is disordered. A Nuclear localization signal (NLS) motif is present at residues 86 to 91 (NKRKRK). An important for DNA and phosphoinositide binding region spans residues 88 to 90 (RKR). A Phosphothreonine modification is found at threonine 92. Phosphoserine occurs at positions 93 and 99. Residue threonine 104 is modified to Phosphothreonine. Residues lysine 155, lysine 166, and lysine 175 each participate in a glycyl lysine isopeptide (Lys-Gly) (interchain with G-Cter in SUMO2) cross-link.

The protein belongs to the SAP30 family. As to quaternary structure, interacts with components of the histone deacetylase complex SIN3A, HDAC1 and HDAC2. Binds histones and nucleosomes. Interacts with FEZ1. In terms of tissue distribution, detected in brain and ovary, and at lower levels in heart, small intestine, lung, kidney, skeletal muscle, stomach and spleen (at protein level). Ubiquitous; expressed in all tissues tested with highest levels in testis.

It is found in the nucleus. Its subcellular location is the nucleolus. Its function is as follows. Functions as a transcription repressor, probably via its interaction with histone deacetylase complexes. Involved in the functional recruitment of the class 1 Sin3-histone deacetylase complex (HDAC) to the nucleolus. Binds DNA, apparently without sequence-specificity, and bends bound double-stranded DNA. Binds phosphoinositol phosphates (phosphoinositol 3-phosphate, phosphoinositol 4-phosphate and phosphoinositol 5-phosphate) via the same basic sequence motif that mediates DNA binding and nuclear import. In terms of biological role, functions as a transcription repressor; isoform 2 has lower transcription repressor activity than isoform 1 and isoform 3. Functionally, functions as a transcription repressor; its activity is marginally lower than that of isoform 1. This Homo sapiens (Human) protein is Histone deacetylase complex subunit SAP30L (SAP30L).